Reading from the N-terminus, the 199-residue chain is Holliday junction branch migration complex subunit RuvA (199 aa).

The segment at 1 to 63 (MIGCLIGEVF…EDAQQLYGFS (63 aa)) is domain I. A domain II region spans residues 64–142 (DAQEKTIFRT…TLAQGTSSAA (79 aa)). The tract at residues 143–150 (ALPQIQFV) is flexible linker. The tract at residues 150 to 199 (VSNSPVAEAEAALQSLGYKPLEAQKAVAAVKADYTESADIIRAALKSMMK) is domain III.

The protein belongs to the RuvA family. In terms of assembly, homotetramer. Forms an RuvA(8)-RuvB(12)-Holliday junction (HJ) complex. HJ DNA is sandwiched between 2 RuvA tetramers; dsDNA enters through RuvA and exits via RuvB. An RuvB hexamer assembles on each DNA strand where it exits the tetramer. Each RuvB hexamer is contacted by two RuvA subunits (via domain III) on 2 adjacent RuvB subunits; this complex drives branch migration. In the full resolvosome a probable DNA-RuvA(4)-RuvB(12)-RuvC(2) complex forms which resolves the HJ.

It localises to the cytoplasm. In terms of biological role, the RuvA-RuvB-RuvC complex processes Holliday junction (HJ) DNA during genetic recombination and DNA repair, while the RuvA-RuvB complex plays an important role in the rescue of blocked DNA replication forks via replication fork reversal (RFR). RuvA specifically binds to HJ cruciform DNA, conferring on it an open structure. The RuvB hexamer acts as an ATP-dependent pump, pulling dsDNA into and through the RuvAB complex. HJ branch migration allows RuvC to scan DNA until it finds its consensus sequence, where it cleaves and resolves the cruciform DNA. The polypeptide is Holliday junction branch migration complex subunit RuvA (Acinetobacter baumannii (strain AB307-0294)).